A 333-amino-acid polypeptide reads, in one-letter code: Ubiquinol oxidase 2, mitochondrial (333 aa).

A helical membrane pass occupies residues 158 to 178; it reads AMMLETVAAVPGMVGGMLLHL. Residues Glu162, Glu201, and His204 each coordinate Fe cation. A helical membrane pass occupies residues 220-240; it reads LLVLAVQGVFFNAFFVLYILS. The Fe cation site is built by Glu252, Glu303, and His306.

This sequence belongs to the alternative oxidase family. As to quaternary structure, homodimer; disulfide-linked. Fe cation serves as cofactor.

The protein localises to the mitochondrion inner membrane. It carries out the reaction 2 a ubiquinol + O2 = 2 a ubiquinone + 2 H2O. In terms of biological role, catalyzes the cyanide-resistant oxidation of ubiquinol and the reduction of molecular oxygen to water, but does not translocate protons and consequently is not linked to oxidative phosphorylation. May increase respiration when the cytochrome respiratory pathway is restricted, or in response to low temperatures. This Glycine max (Soybean) protein is Ubiquinol oxidase 2, mitochondrial (AOX2).